The following is a 372-amino-acid chain: Alanine racemase (372 aa).

K33 acts as the Proton acceptor; specific for D-alanine in catalysis. K33 is subject to N6-(pyridoxal phosphate)lysine. A substrate-binding site is contributed by R131. The active-site Proton acceptor; specific for L-alanine is Y261. M309 is a binding site for substrate.

It belongs to the alanine racemase family. The cofactor is pyridoxal 5'-phosphate.

It catalyses the reaction L-alanine = D-alanine. The protein operates within amino-acid biosynthesis; D-alanine biosynthesis; D-alanine from L-alanine: step 1/1. Catalyzes the interconversion of L-alanine and D-alanine. May also act on other amino acids. This is Alanine racemase (alr) from Salinispora tropica (strain ATCC BAA-916 / DSM 44818 / JCM 13857 / NBRC 105044 / CNB-440).